Here is a 341-residue protein sequence, read N- to C-terminus: UDP-3-O-acylglucosamine N-acyltransferase (341 aa).

Histidine 255 acts as the Proton acceptor in catalysis.

It belongs to the transferase hexapeptide repeat family. LpxD subfamily. Homotrimer.

It carries out the reaction a UDP-3-O-[(3R)-3-hydroxyacyl]-alpha-D-glucosamine + a (3R)-hydroxyacyl-[ACP] = a UDP-2-N,3-O-bis[(3R)-3-hydroxyacyl]-alpha-D-glucosamine + holo-[ACP] + H(+). Its pathway is bacterial outer membrane biogenesis; LPS lipid A biosynthesis. In terms of biological role, catalyzes the N-acylation of UDP-3-O-acylglucosamine using 3-hydroxyacyl-ACP as the acyl donor. Is involved in the biosynthesis of lipid A, a phosphorylated glycolipid that anchors the lipopolysaccharide to the outer membrane of the cell. The polypeptide is UDP-3-O-acylglucosamine N-acyltransferase (Granulibacter bethesdensis (strain ATCC BAA-1260 / CGDNIH1)).